The following is a 765-amino-acid chain: Kinesin-like protein KIN-14S (765 aa).

The 325-residue stretch at 132 to 456 (NIRVFCRCRP…LNFASRVRGI (325 aa)) folds into the Kinesin motor domain. An ATP-binding site is contributed by 215–222 (GQTGTGKT). The stretch at 469–534 (ELLKSKQMAE…ERKTRIKQES (66 aa)) forms a coiled coil. Disordered stretches follow at residues 581–613 (MPQQ…SSMD) and 654–678 (LRPE…RGDP). The span at 602–611 (NNNSNRRSSS) shows a compositional bias: low complexity.

This sequence belongs to the TRAFAC class myosin-kinesin ATPase superfamily. Kinesin family. KIN-14 subfamily.

This Arabidopsis thaliana (Mouse-ear cress) protein is Kinesin-like protein KIN-14S.